A 347-amino-acid chain; its full sequence is NADH-quinone oxidoreductase subunit H 1 (347 aa).

9 helical membrane-spanning segments follow: residues 14–34 (IMIG…AYVL), 50–70 (PNVV…KFVF), 83–103 (IFLL…AVIP), 115–135 (VGIL…IMGG), 161–181 (IGFV…TDIV), 198–218 (FLDW…ISAL), 258–278 (AICL…LPPV), 286–306 (VPGI…FAMV), and 321–341 (LGWK…AFVL).

Belongs to the complex I subunit 1 family. NDH-1 is composed of 14 different subunits. Subunits NuoA, H, J, K, L, M, N constitute the membrane sector of the complex.

Its subcellular location is the cell inner membrane. It catalyses the reaction a quinone + NADH + 5 H(+)(in) = a quinol + NAD(+) + 4 H(+)(out). NDH-1 shuttles electrons from NADH, via FMN and iron-sulfur (Fe-S) centers, to quinones in the respiratory chain. The immediate electron acceptor for the enzyme in this species is believed to be ubiquinone. Couples the redox reaction to proton translocation (for every two electrons transferred, four hydrogen ions are translocated across the cytoplasmic membrane), and thus conserves the redox energy in a proton gradient. This subunit may bind ubiquinone. The chain is NADH-quinone oxidoreductase subunit H 1 from Rhizobium meliloti (strain 1021) (Ensifer meliloti).